A 154-amino-acid chain; its full sequence is 3-dehydroquinate dehydratase (154 aa).

Catalysis depends on tyrosine 22, which acts as the Proton acceptor. Substrate contacts are provided by asparagine 73, histidine 79, and aspartate 86. Residue histidine 99 is the Proton donor of the active site. Substrate-binding positions include 100 to 101 (LS) and arginine 110.

The protein belongs to the type-II 3-dehydroquinase family. As to quaternary structure, homododecamer.

It catalyses the reaction 3-dehydroquinate = 3-dehydroshikimate + H2O. It functions in the pathway metabolic intermediate biosynthesis; chorismate biosynthesis; chorismate from D-erythrose 4-phosphate and phosphoenolpyruvate: step 3/7. Its function is as follows. Catalyzes a trans-dehydration via an enolate intermediate. This is 3-dehydroquinate dehydratase from Carboxydothermus hydrogenoformans (strain ATCC BAA-161 / DSM 6008 / Z-2901).